We begin with the raw amino-acid sequence, 75 residues long: MSSEKKLKAKVLREMKPEERRELLNQLRAELVRLETQRARGFVEKPGRIRQVRRIIARILTIEREEELKKAKSRS.

This sequence belongs to the universal ribosomal protein uL29 family.

This chain is Large ribosomal subunit protein uL29, found in Pyrobaculum aerophilum (strain ATCC 51768 / DSM 7523 / JCM 9630 / CIP 104966 / NBRC 100827 / IM2).